The sequence spans 968 residues: RNA polymerase-associated protein RapA (968 aa).

Residues 164 to 334 (EVGQRHAPRV…FARLRLLDPD (171 aa)) enclose the Helicase ATP-binding domain. 177–184 (DEVGLGKT) serves as a coordination point for ATP. The DEAH box signature appears at 280–283 (DEAH). Positions 490-644 (RVEWLLNYLV…TCPTGRTIYD (155 aa)) constitute a Helicase C-terminal domain.

It belongs to the SNF2/RAD54 helicase family. RapA subfamily. In terms of assembly, interacts with the RNAP. Has a higher affinity for the core RNAP than for the holoenzyme. Its ATPase activity is stimulated by binding to RNAP.

Its function is as follows. Transcription regulator that activates transcription by stimulating RNA polymerase (RNAP) recycling in case of stress conditions such as supercoiled DNA or high salt concentrations. Probably acts by releasing the RNAP, when it is trapped or immobilized on tightly supercoiled DNA. Does not activate transcription on linear DNA. Probably not involved in DNA repair. This Yersinia pestis bv. Antiqua (strain Antiqua) protein is RNA polymerase-associated protein RapA.